The primary structure comprises 156 residues: SsrA-binding protein (156 aa).

It belongs to the SmpB family.

It is found in the cytoplasm. In terms of biological role, required for rescue of stalled ribosomes mediated by trans-translation. Binds to transfer-messenger RNA (tmRNA), required for stable association of tmRNA with ribosomes. tmRNA and SmpB together mimic tRNA shape, replacing the anticodon stem-loop with SmpB. tmRNA is encoded by the ssrA gene; the 2 termini fold to resemble tRNA(Ala) and it encodes a 'tag peptide', a short internal open reading frame. During trans-translation Ala-aminoacylated tmRNA acts like a tRNA, entering the A-site of stalled ribosomes, displacing the stalled mRNA. The ribosome then switches to translate the ORF on the tmRNA; the nascent peptide is terminated with the 'tag peptide' encoded by the tmRNA and targeted for degradation. The ribosome is freed to recommence translation, which seems to be the essential function of trans-translation. This Maricaulis maris (strain MCS10) (Caulobacter maris) protein is SsrA-binding protein.